The primary structure comprises 334 residues: MEAAHFFEGTEKLLEVWFSRQQSDASQGSGDLRTIPRSEWDVLLKDVQCSIISVTKTDKQEAYVLSESSMFVSKRRFILKTCGTTLLLKALVPLLKLARDYSGFDSIQSFFYSRKNFMKPSHQGYPHRNFQEEIEFLNVIFPNGAAYCMGRMNSDCWYLYTLDFPESRVISQPDQTLEILMSELDPAVMDQFYMKDGVTAKDVTRESGIRDLIPGSVIDATLFNPCGYSMNGMKSDGTYWTIHITPEPEFSYVSFETNLSQTSYDDLIRKVVEVFKPGKFVTTLFVNQSSKCRTVLSSPQKIDGFKRLDCQSAMFNDYNFVFTSFAKKQQQQQS.

A substrate-binding site is contributed by Phe-7. Catalysis depends on residues Glu-8 and Glu-11. Glu-67 serves as a coordination point for substrate. The active-site Schiff-base intermediate with substrate; via pyruvic acid is the Ser-68. A Pyruvic acid (Ser); by autocatalysis modification is found at Ser-68. Cys-82 functions as the Proton donor; for catalytic activity in the catalytic mechanism. Phe-223 provides a ligand contact to substrate. Active-site proton acceptor; for processing activity residues include Ser-229 and His-243. Glu-247 is a binding site for substrate. Residue Ser-298 is modified to Phosphoserine.

The protein belongs to the eukaryotic AdoMetDC family. Heterotetramer of two alpha and two beta chains. Requires pyruvate as cofactor. Post-translationally, is synthesized initially as an inactive proenzyme. Formation of the active enzyme involves a self-maturation process in which the active site pyruvoyl group is generated from an internal serine residue via an autocatalytic post-translational modification. Two non-identical subunits are generated from the proenzyme in this reaction, and the pyruvate is formed at the N-terminus of the alpha chain, which is derived from the carboxyl end of the proenzyme. The post-translation cleavage follows an unusual pathway, termed non-hydrolytic serinolysis, in which the side chain hydroxyl group of the serine supplies its oxygen atom to form the C-terminus of the beta chain, while the remainder of the serine residue undergoes an oxidative deamination to produce ammonia and the pyruvoyl group blocking the N-terminus of the alpha chain.

The catalysed reaction is S-adenosyl-L-methionine + H(+) = S-adenosyl 3-(methylsulfanyl)propylamine + CO2. It functions in the pathway amine and polyamine biosynthesis; S-adenosylmethioninamine biosynthesis; S-adenosylmethioninamine from S-adenosyl-L-methionine: step 1/1. Essential for biosynthesis of the polyamines spermidine and spermine. Promotes maintenance and self-renewal of embryonic stem cells, by maintaining spermine levels. The protein is S-adenosylmethionine decarboxylase proenzyme 2 (Amd2) of Mus spretus (Western Mediterranean mouse).